Here is a 612-residue protein sequence, read N- to C-terminus: Indole-3-acetic acid-amido synthetase GH3.6 (612 aa).

It belongs to the IAA-amido conjugating enzyme family. Expressed in cotyledons, stipules, true leaves, hypocotyls, and all parts of the roots. Not detected in flowers.

Catalyzes the synthesis of indole-3-acetic acid (IAA)-amino acid conjugates, providing a mechanism for the plant to cope with the presence of excess auxin. Strongly reactive with Glu, Gln, Trp, Asp, Ala, Leu, Phe, Gly, Tyr, Met, Ile and Val. Little or no product formation with His, Ser, Thr, Arg, Lys, or Cys. Also active on pyruvic and butyric acid analogs of IAA, PAA and the synthetic auxin naphthaleneacetic acid (NAA). The two chlorinated synthetic auxin herbicides 2,4-D and 3,6-dichloro-o-anisic acid (dicamba) cannot be used as substrates. Involved in auxin signal transduction. Inhibits shoot and hypocotyl cell elongation, and lateral root cell differentiation in light. This is Indole-3-acetic acid-amido synthetase GH3.6 (GH3.6) from Arabidopsis thaliana (Mouse-ear cress).